The following is a 116-amino-acid chain: Large ribosomal subunit protein bL19 (116 aa).

It belongs to the bacterial ribosomal protein bL19 family.

This protein is located at the 30S-50S ribosomal subunit interface and may play a role in the structure and function of the aminoacyl-tRNA binding site. The sequence is that of Large ribosomal subunit protein bL19 from Staphylococcus saprophyticus subsp. saprophyticus (strain ATCC 15305 / DSM 20229 / NCIMB 8711 / NCTC 7292 / S-41).